The primary structure comprises 465 residues: Glutamate--tRNA ligase 2 (465 aa).

The 'HIGH' region signature appears at 8–18 (PSPTGLMHLGN). The 'KMSKS' region signature appears at 249–253 (PLSKR). Lys252 serves as a coordination point for ATP.

Belongs to the class-I aminoacyl-tRNA synthetase family. Glutamate--tRNA ligase type 1 subfamily. Monomer.

The protein resides in the cytoplasm. The enzyme catalyses tRNA(Glu) + L-glutamate + ATP = L-glutamyl-tRNA(Glu) + AMP + diphosphate. Its function is as follows. Catalyzes the attachment of glutamate to tRNA(Glu) in a two-step reaction: glutamate is first activated by ATP to form Glu-AMP and then transferred to the acceptor end of tRNA(Glu). This chain is Glutamate--tRNA ligase 2, found in Coxiella burnetii (strain RSA 331 / Henzerling II).